Consider the following 62-residue polypeptide: uncharacterized protein (62 aa).

The signal sequence occupies residues 1–19 (MKLIILLFVVAAFVTLAMG).

This is an uncharacterized protein from Lepidoptera (butterflies and moths).